The following is a 214-amino-acid chain: Ras-related protein Rab-11A (214 aa).

GTP is bound by residues 20–28, 39–45, 68–72, 126–129, and 156–158; these read GDSGVGKSN, SLETKST, DTAGQ, NKSD, and SAL. Positions 42-50 match the Effector region motif; that stretch reads TKSTIGVEF. S-geranylgeranyl cysteine attachment occurs at residues Cys-213 and Cys-214.

This sequence belongs to the small GTPase superfamily. Rab family.

It is found in the contractile vacuole membrane. Required for normal contractile vacuole structure and function. Cells expressing a dominant negative rab11A exhibit a more extensive contractile vacuole network and enlarged contractile vacuole bladders. These cells exhibit a functional defect in osmotic regulation where cells immersed in water become rounded and detach from the surface, and contain swollen contractile vacuoles. The protein is Ras-related protein Rab-11A (rab11A) of Dictyostelium discoideum (Social amoeba).